A 254-amino-acid polypeptide reads, in one-letter code: L-rhamnose 1-dehydrogenase (NAD(P)(+)) (254 aa).

Residues G13, S15, I18, D64, V65, and N91 each coordinate NADP(+). S144 (proton donor) is an active-site residue. The beta-L-rhamnose site is built by S144, S146, Q154, and Y157. 2 residues coordinate NADP(+): Y157 and K161. The active-site Proton acceptor is Y157. The Lowers pKa of active site Tyr role is filled by K161. T189 contacts beta-L-rhamnose. I190 serves as a coordination point for NADP(+). N195 serves as a coordination point for beta-L-rhamnose.

Belongs to the short-chain dehydrogenases/reductases (SDR) family.

The enzyme catalyses L-rhamnofuranose + NAD(+) = L-rhamnono-1,4-lactone + NADH + H(+). The catalysed reaction is L-rhamnofuranose + NADP(+) = L-rhamnono-1,4-lactone + NADPH + H(+). The protein operates within carbohydrate degradation; L-rhamnose degradation. In terms of biological role, NAD(P)-dependent dehydrogenase that catalyzes the oxidation of L-rhamnose to L-rhamnono-1,4-lactone. Also shows high activity with L-lyxose and low activity with L-mannose. Can utilize either NAD(+) or NADP(+), with a slight preference for NADP(+). Catalyzes the first step in an alternative pathway for rhamnose utilization that does not involve phosphorylated intermediates. This Sphingomonas sp. (strain SKA58) protein is L-rhamnose 1-dehydrogenase (NAD(P)(+)).